The sequence spans 311 residues: Taste receptor type 2 member 40 (311 aa).

The Extracellular portion of the chain corresponds to 1 to 9; the sequence is MSSLFSSFC. Residues 10-30 traverse the membrane as a helical segment; the sequence is LVIAIFESVVGLLGNGTIVAV. Over 31–55 the chain is Cytoplasmic; sequence SSTSCIRSKILSSYDVIVIFLSLSR. The helical transmembrane segment at 56–76 threads the bilayer; it reads FFLQLWMILDFLLIFFCQPSY. The Extracellular portion of the chain corresponds to 77–87; sequence YEENLFVTFKT. Residues 88–108 traverse the membrane as a helical segment; it reads VFIFLNSYSFWFAAWLSVFYC. Over 109–128 the chain is Cytoplasmic; that stretch reads VKVASFTQSFLSWLKQRIAS. The helical transmembrane segment at 129 to 149 threads the bilayer; it reads LIPWMLITSSLFSFATSLPFF. Residues 150–178 are Extracellular-facing; sequence WDSYNAHSNFTTPLTMTNSSKRITTRKTN. Residues 179 to 199 traverse the membrane as a helical segment; the sequence is LIFLILLCNVGIALPSIMLVF. Residues 200–235 are Cytoplasmic-facing; the sequence is SSILLIRSLWRHTRQMQNNATGFRDPSLEALIGAIK. A helical transmembrane segment spans residues 236–256; that stretch reads TVFSFLLLYITNFIALILILS. At 257–266 the chain is on the extracellular side; the sequence is DTFVPLSTEE. The chain crosses the membrane as a helical span at residues 267 to 287; that stretch reads AICVVVVAACPAGQSMVLIWS. Over 288 to 311 the chain is Cytoplasmic; sequence NPRFRELLSSILHYVNSCVRARCS.

Belongs to the G-protein coupled receptor T2R family. As to expression, expressed in the oral cavity, as well as in the gastrointestinal tract, including in the upper palate, tongue, proventriculus, ventriculus, duodenum, jejunum, ileum, cecum and colon.

It is found in the cell membrane. In terms of biological role, bitter taste receptor. Binds quinine, dextromethorphan, diphenhydramine, diphenidol, chlorpheniramine, diphenidol, chloramphenicol, chloroquine and coumarin, this latter being a weak agonist, as well as epiquinidine, ethylhydrocupreine and quinidine. The chain is Taste receptor type 2 member 40 (TAS2R40) from Gallus gallus (Chicken).